Here is a 212-residue protein sequence, read N- to C-terminus: Probable GTP-binding protein EngB (212 aa).

One can recognise an EngB-type G domain in the interval 38-210; that stretch reads ALPQIAFVGK…KTSLAKCIKL (173 aa). GTP-binding positions include 46–53, 73–77, 91–94, 158–161, and 189–191; these read GKSNVGKS, GRTRQ, DLPG, TKSD, and VSS. Residues Ser-53 and Thr-75 each contribute to the Mg(2+) site.

It belongs to the TRAFAC class TrmE-Era-EngA-EngB-Septin-like GTPase superfamily. EngB GTPase family. Mg(2+) serves as cofactor.

Necessary for normal cell division and for the maintenance of normal septation. This Rickettsia bellii (strain OSU 85-389) protein is Probable GTP-binding protein EngB.